Reading from the N-terminus, the 86-residue chain is MKPDIHPEYRETTVICSCGNTFTTRSTAKSGVIHAEVCSNCHPFYTGKQKILDVGGRVQKFEKRFGQLTGAARVARSTGKPRAGRK.

4 residues coordinate Zn(2+): Cys16, Cys18, Cys38, and Cys41.

It belongs to the bacterial ribosomal protein bL31 family. Type A subfamily. In terms of assembly, part of the 50S ribosomal subunit. It depends on Zn(2+) as a cofactor.

In terms of biological role, binds the 23S rRNA. This Acidothermus cellulolyticus (strain ATCC 43068 / DSM 8971 / 11B) protein is Large ribosomal subunit protein bL31.